The following is a 631-amino-acid chain: MCGIVGYIGTQTAVNILIEGLERLEYRGYDSAGIATVTEGKIESVRAKGKLFNLKEKLENHSNFSRLGIGHTRWATHGKPEEHNAHPHLDNQQRIAVVQNGIIENYQTLRDQLKEKGYQFYSETDTEVIPILIADILKDLPSDDPDEALLEAIGKAVHQLEGAFAIAVLDAHCPEQLIVARQQAPLILGFGQGEFFCASDVTALVHHTTTVLSLENGEIARLTPLGVEVYDFNLKRVRKLPRTLDWSATTVEKQGFRHFMLKEIYEQPAVVRTCLATYLNEQWRAADHPSHSPVFLGLDPQLTKNLQHIQVLACGTSWHAGLVGKYLLEQLAGIPTTVHYASEFRYAAPPLTPHTLTIGVTQSGETADTLAALEMEKQRRLTLEDDYKPLILGITNRPESTLATMVNEIINTHAGIEIGVAATKTFVAQVLAFYFLALDIAFQRHSLSLEAIEHIMVGLRQLPAQIETILEQQGSAIEALAHEFAETQDFIFLGRGINFPIALEGALKLKEISYIHAEGYPAGEMKHGPIALLDAKVPVVAIAMPGSVHDKVISNAQEAKARDARLIGVTPMDDSQARSVFDDLLLVPHVEEMLSPIVAVIPLQLLSYHIAARRGLDVDQPRNLAKSVTVE.

Cysteine 2 serves as the catalytic Nucleophile; for GATase activity. One can recognise a Glutamine amidotransferase type-2 domain in the interval 2-225 (CGIVGYIGTQ…NGEIARLTPL (224 aa)). SIS domains lie at 298–446 (LDPQ…QRHS) and 480–621 (LAHE…VDQP). Catalysis depends on lysine 626, which acts as the For Fru-6P isomerization activity.

In terms of assembly, homodimer.

The protein resides in the cytoplasm. It carries out the reaction D-fructose 6-phosphate + L-glutamine = D-glucosamine 6-phosphate + L-glutamate. Catalyzes the first step in hexosamine metabolism, converting fructose-6P into glucosamine-6P using glutamine as a nitrogen source. The protein is Glutamine--fructose-6-phosphate aminotransferase [isomerizing] of Synechocystis sp. (strain ATCC 27184 / PCC 6803 / Kazusa).